Reading from the N-terminus, the 295-residue chain is Acetylglutamate kinase (295 aa).

Substrate contacts are provided by residues glycine 66–glycine 67, arginine 88, and asparagine 193.

The protein belongs to the acetylglutamate kinase family. ArgB subfamily.

The protein localises to the cytoplasm. It catalyses the reaction N-acetyl-L-glutamate + ATP = N-acetyl-L-glutamyl 5-phosphate + ADP. Its pathway is amino-acid biosynthesis; L-arginine biosynthesis; N(2)-acetyl-L-ornithine from L-glutamate: step 2/4. Functionally, catalyzes the ATP-dependent phosphorylation of N-acetyl-L-glutamate. In Sinorhizobium medicae (strain WSM419) (Ensifer medicae), this protein is Acetylglutamate kinase.